A 244-amino-acid polypeptide reads, in one-letter code: Large ribosomal subunit protein uL2 (244 aa).

Basic residues-rich tracts occupy residues 1–12 (MGKRPLVRRRGR) and 234–244 (KTGRARIKERK). Disordered stretches follow at residues 1–30 (MGKRPLVRRRGRGGNQFRSTSTGKVGTKAN) and 203–244 (HGGG…KERK).

Belongs to the universal ribosomal protein uL2 family. In terms of assembly, part of the 50S ribosomal subunit. Forms a bridge to the 30S subunit in the 70S ribosome.

One of the primary rRNA binding proteins. Required for association of the 30S and 50S subunits to form the 70S ribosome, for tRNA binding and peptide bond formation. It has been suggested to have peptidyltransferase activity; this is somewhat controversial. Makes several contacts with the 16S rRNA in the 70S ribosome. The polypeptide is Large ribosomal subunit protein uL2 (Nitrosopumilus maritimus (strain SCM1)).